A 185-amino-acid chain; its full sequence is Crossover junction endodeoxyribonuclease RuvC (185 aa).

Residues aspartate 7, glutamate 66, and aspartate 137 contribute to the active site. Residues aspartate 7, glutamate 66, and aspartate 137 each coordinate Mg(2+).

Belongs to the RuvC family. In terms of assembly, homodimer which binds Holliday junction (HJ) DNA. The HJ becomes 2-fold symmetrical on binding to RuvC with unstacked arms; it has a different conformation from HJ DNA in complex with RuvA. In the full resolvosome a probable DNA-RuvA(4)-RuvB(12)-RuvC(2) complex forms which resolves the HJ. Requires Mg(2+) as cofactor.

The protein localises to the cytoplasm. The enzyme catalyses Endonucleolytic cleavage at a junction such as a reciprocal single-stranded crossover between two homologous DNA duplexes (Holliday junction).. Functionally, the RuvA-RuvB-RuvC complex processes Holliday junction (HJ) DNA during genetic recombination and DNA repair. Endonuclease that resolves HJ intermediates. Cleaves cruciform DNA by making single-stranded nicks across the HJ at symmetrical positions within the homologous arms, yielding a 5'-phosphate and a 3'-hydroxyl group; requires a central core of homology in the junction. The consensus cleavage sequence is 5'-(A/T)TT(C/G)-3'. Cleavage occurs on the 3'-side of the TT dinucleotide at the point of strand exchange. HJ branch migration catalyzed by RuvA-RuvB allows RuvC to scan DNA until it finds its consensus sequence, where it cleaves and resolves the cruciform DNA. This is Crossover junction endodeoxyribonuclease RuvC from Anaeromyxobacter dehalogenans (strain 2CP-C).